A 914-amino-acid polypeptide reads, in one-letter code: Probable dipeptidyl-aminopeptidase B (914 aa).

The disordered stretch occupies residues 1-82 (MGAEKRINDE…GLPPPSGAQR (82 aa)). Topologically, residues 1–88 (MGAEKRINDE…GAQRTPKKVS (88 aa)) are cytoplasmic. A compositionally biased stretch (low complexity) spans 26–38 (DSTSTASISLALI). Residues 89-109 (IIFWLVAALCVGGWLVAFFVF) traverse the membrane as a helical; Signal-anchor for type II membrane protein segment. At 110 to 914 (MGSPKKDSDK…RSLLKRMSNA (805 aa)) the chain is on the vacuolar side. N-linked (GlcNAc...) asparagine glycans are attached at residues Asn128, Asn295, Asn347, and Asn617. Ser751 serves as the catalytic Charge relay system. N-linked (GlcNAc...) asparagine glycosylation is present at Asn810. Residues Asp828 and His861 each act as charge relay system in the active site. Asn897 carries N-linked (GlcNAc...) asparagine glycosylation.

The protein belongs to the peptidase S9B family.

The protein localises to the vacuole membrane. It carries out the reaction Release of an N-terminal dipeptide, Xaa-Yaa-|-Zaa-, from a polypeptide, preferentially when Yaa is Pro, provided Zaa is neither Pro nor hydroxyproline.. Functionally, type IV dipeptidyl-peptidase which removes N-terminal dipeptides sequentially from polypeptides having unsubstituted N-termini provided that the penultimate residue is proline. This Uncinocarpus reesii (strain UAMH 1704) protein is Probable dipeptidyl-aminopeptidase B (DAPB).